Consider the following 73-residue polypeptide: RNA-binding protein Hfq (73 aa).

The 61-residue stretch at 8-68 (DQFLNQIRKD…ISTFAPQKNV (61 aa)) folds into the Sm domain.

This sequence belongs to the Hfq family. As to quaternary structure, homohexamer.

Its function is as follows. RNA chaperone that binds small regulatory RNA (sRNAs) and mRNAs to facilitate mRNA translational regulation in response to envelope stress, environmental stress and changes in metabolite concentrations. Also binds with high specificity to tRNAs. This is RNA-binding protein Hfq from Bacillus pumilus (strain SAFR-032).